The sequence spans 426 residues: Enolase (426 aa).

Position 163 (glutamine 163) interacts with (2R)-2-phosphoglycerate. Glutamate 205 acts as the Proton donor in catalysis. Residues aspartate 242, glutamate 286, and aspartate 313 each contribute to the Mg(2+) site. (2R)-2-phosphoglycerate is bound by residues lysine 338, arginine 367, serine 368, and lysine 389. Catalysis depends on lysine 338, which acts as the Proton acceptor.

This sequence belongs to the enolase family. Mg(2+) serves as cofactor.

It localises to the cytoplasm. It is found in the secreted. The protein localises to the cell surface. The enzyme catalyses (2R)-2-phosphoglycerate = phosphoenolpyruvate + H2O. It functions in the pathway carbohydrate degradation; glycolysis; pyruvate from D-glyceraldehyde 3-phosphate: step 4/5. Its function is as follows. Catalyzes the reversible conversion of 2-phosphoglycerate (2-PG) into phosphoenolpyruvate (PEP). It is essential for the degradation of carbohydrates via glycolysis. This is Enolase from Helicobacter pylori (strain J99 / ATCC 700824) (Campylobacter pylori J99).